The following is a 235-amino-acid chain: Exosome complex component Rrp4 (235 aa).

The region spanning 67-139 (GDVVIGLIQS…KTRSPLLTVQ (73 aa)) is the S1 motif domain. Residues 149–205 (GKIVEISPAKVPRVIGRKMSMLKTLEEKTECKIFVARNGRIHLECPNEDLEAIAVMA) form the KH domain.

Belongs to the RRP4 family. In terms of assembly, component of the archaeal exosome complex. Forms a trimer of Rrp4 and/or Csl4 subunits. The trimer associates with a hexameric ring-like arrangement composed of 3 Rrp41-Rrp42 heterodimers.

The protein localises to the cytoplasm. Its function is as follows. Non-catalytic component of the exosome, which is a complex involved in RNA degradation. Increases the RNA binding and the efficiency of RNA degradation. Confers strong poly(A) specificity to the exosome. The chain is Exosome complex component Rrp4 from Aeropyrum pernix (strain ATCC 700893 / DSM 11879 / JCM 9820 / NBRC 100138 / K1).